The primary structure comprises 486 residues: NADH-quinone oxidoreductase subunit N (486 aa).

Transmembrane regions (helical) follow at residues 5–25, 41–61, 77–97, 118–138, 165–185, 209–229, 245–265, 275–295, 304–324, 335–355, 380–400, 413–433, and 458–478; these read IGLS…ASLL, LITL…LVVF, GVTQ…MVMM, SAVG…FIGL, YFIL…FIFG, FLFG…IAPF, TAFM…RIIA, LFDI…AAAI, IAYS…TAGV, VIFY…IAAM, ALCL…LGFF, GLLW…YYYL, and VTAV…GPIF.

This sequence belongs to the complex I subunit 2 family. In terms of assembly, NDH-1 is composed of 14 different subunits. Subunits NuoA, H, J, K, L, M, N constitute the membrane sector of the complex.

The protein resides in the cell inner membrane. The catalysed reaction is a quinone + NADH + 5 H(+)(in) = a quinol + NAD(+) + 4 H(+)(out). In terms of biological role, NDH-1 shuttles electrons from NADH, via FMN and iron-sulfur (Fe-S) centers, to quinones in the respiratory chain. The immediate electron acceptor for the enzyme in this species is believed to be ubiquinone. Couples the redox reaction to proton translocation (for every two electrons transferred, four hydrogen ions are translocated across the cytoplasmic membrane), and thus conserves the redox energy in a proton gradient. This Bdellovibrio bacteriovorus (strain ATCC 15356 / DSM 50701 / NCIMB 9529 / HD100) protein is NADH-quinone oxidoreductase subunit N.